The chain runs to 194 residues: Erythropoietin (194 aa).

The signal sequence occupies residues 1-26 (MGARECPARLLLLSLLLLPLGLPVLG). Intrachain disulfides connect cysteine 33-cysteine 189 and cysteine 55-cysteine 59. A glycan (N-linked (GlcNAc...) asparagine) is linked at asparagine 50. Asparagine 64, asparagine 109, and asparagine 172 each carry an N-linked (GlcNAc...) asparagine glycan.

The protein belongs to the EPO/TPO family. As to expression, produced by kidney or liver of adult mammals and by liver of fetal or neonatal mammals.

It localises to the secreted. Hormone involved in the regulation of erythrocyte proliferation and differentiation and the maintenance of a physiological level of circulating erythrocyte mass. Binds to EPOR leading to EPOR dimerization and JAK2 activation thereby activating specific downstream effectors, including STAT1 and STAT3. This chain is Erythropoietin (EPO), found in Sus scrofa (Pig).